Here is a 551-residue protein sequence, read N- to C-terminus: Medium/long-chain-fatty-acid--CoA/3-oxocholest-4-en-26-oate--CoA ligase (551 aa).

ATP contacts are provided by residues 172–180 (TGGTTGFPK), D417, R432, and K523.

This sequence belongs to the ATP-dependent AMP-binding enzyme family.

It carries out the reaction a medium-chain fatty acid + ATP + CoA = a medium-chain fatty acyl-CoA + AMP + diphosphate. It catalyses the reaction a long-chain fatty acid + ATP + CoA = a long-chain fatty acyl-CoA + AMP + diphosphate. The enzyme catalyses (25S)-3-oxocholest-4-en-26-oate + ATP + CoA = (25S)-3-oxocholest-4-en-26-oyl-CoA + AMP + diphosphate. It functions in the pathway lipid metabolism; fatty acid biosynthesis. It participates in steroid metabolism; cholesterol metabolism. Functionally, plays an essential role in degradation of the side chains of C-24 branched-chain sterols. Not essential for degradation of straight chain sterols such as cholesterol. Catalyzes the activation of medium/long-chain fatty acids as acyl-coenzyme A (acyl-CoA), which are then transferred to the multifunctional polyketide synthase (PKS) type III for further chain extension. May be involved in the degradation of cholesterol via the degradation of the side chains of C-24 branched-chain sterols. This Mycolicibacterium smegmatis (strain ATCC 700084 / mc(2)155) (Mycobacterium smegmatis) protein is Medium/long-chain-fatty-acid--CoA/3-oxocholest-4-en-26-oate--CoA ligase.